We begin with the raw amino-acid sequence, 85 residues long: CRISPR-associated endoribonuclease Cas2 (85 aa).

Asp-8 is a Mg(2+) binding site.

It belongs to the CRISPR-associated endoribonuclease Cas2 protein family. Homodimer, forms a heterotetramer with a Cas1 homodimer. Requires Mg(2+) as cofactor.

In terms of biological role, CRISPR (clustered regularly interspaced short palindromic repeat), is an adaptive immune system that provides protection against mobile genetic elements (viruses, transposable elements and conjugative plasmids). CRISPR clusters contain sequences complementary to antecedent mobile elements and target invading nucleic acids. CRISPR clusters are transcribed and processed into CRISPR RNA (crRNA). Functions as a ssRNA-specific endoribonuclease. Involved in the integration of spacer DNA into the CRISPR cassette. The chain is CRISPR-associated endoribonuclease Cas2 from Pyrococcus furiosus (strain ATCC 43587 / DSM 3638 / JCM 8422 / Vc1).